A 334-amino-acid polypeptide reads, in one-letter code: Glycerol-3-phosphate dehydrogenase [NAD(P)+] (334 aa).

NADPH-binding residues include tryptophan 13, arginine 33, and lysine 106. Sn-glycerol 3-phosphate is bound by residues lysine 106, glycine 137, and serine 139. Alanine 141 serves as a coordination point for NADPH. Residues lysine 192, aspartate 245, serine 255, arginine 256, and asparagine 257 each contribute to the sn-glycerol 3-phosphate site. Lysine 192 functions as the Proton acceptor in the catalytic mechanism. Arginine 256 is an NADPH binding site. Residues valine 280 and glutamate 282 each coordinate NADPH.

This sequence belongs to the NAD-dependent glycerol-3-phosphate dehydrogenase family.

It is found in the cytoplasm. The catalysed reaction is sn-glycerol 3-phosphate + NAD(+) = dihydroxyacetone phosphate + NADH + H(+). It carries out the reaction sn-glycerol 3-phosphate + NADP(+) = dihydroxyacetone phosphate + NADPH + H(+). Its pathway is membrane lipid metabolism; glycerophospholipid metabolism. Functionally, catalyzes the reduction of the glycolytic intermediate dihydroxyacetone phosphate (DHAP) to sn-glycerol 3-phosphate (G3P), the key precursor for phospholipid synthesis. This Chlamydia trachomatis serovar L2b (strain UCH-1/proctitis) protein is Glycerol-3-phosphate dehydrogenase [NAD(P)+].